The chain runs to 465 residues: Siroheme synthase (465 aa).

A precorrin-2 dehydrogenase /sirohydrochlorin ferrochelatase region spans residues 1–203 (MDFLPLFHSL…GRPAEAERLL (203 aa)). Residues 22–23 (EV) and 43–44 (PQ) each bind NAD(+). S128 is subject to Phosphoserine. The uroporphyrinogen-III C-methyltransferase stretch occupies residues 217-465 (GEVYLVGAGP…AWFEGAREDA (249 aa)). P226 is a binding site for S-adenosyl-L-methionine. D249 (proton acceptor) is an active-site residue. The active-site Proton donor is K271. S-adenosyl-L-methionine is bound by residues 302–304 (GGD), I307, 332–333 (TA), M384, and G413.

This sequence in the N-terminal section; belongs to the precorrin-2 dehydrogenase / sirohydrochlorin ferrochelatase family. The protein in the C-terminal section; belongs to the precorrin methyltransferase family.

It carries out the reaction uroporphyrinogen III + 2 S-adenosyl-L-methionine = precorrin-2 + 2 S-adenosyl-L-homocysteine + H(+). The enzyme catalyses precorrin-2 + NAD(+) = sirohydrochlorin + NADH + 2 H(+). It catalyses the reaction siroheme + 2 H(+) = sirohydrochlorin + Fe(2+). It participates in cofactor biosynthesis; adenosylcobalamin biosynthesis; precorrin-2 from uroporphyrinogen III: step 1/1. Its pathway is cofactor biosynthesis; adenosylcobalamin biosynthesis; sirohydrochlorin from precorrin-2: step 1/1. The protein operates within porphyrin-containing compound metabolism; siroheme biosynthesis; precorrin-2 from uroporphyrinogen III: step 1/1. It functions in the pathway porphyrin-containing compound metabolism; siroheme biosynthesis; siroheme from sirohydrochlorin: step 1/1. It participates in porphyrin-containing compound metabolism; siroheme biosynthesis; sirohydrochlorin from precorrin-2: step 1/1. Multifunctional enzyme that catalyzes the SAM-dependent methylations of uroporphyrinogen III at position C-2 and C-7 to form precorrin-2 via precorrin-1. Then it catalyzes the NAD-dependent ring dehydrogenation of precorrin-2 to yield sirohydrochlorin. Finally, it catalyzes the ferrochelation of sirohydrochlorin to yield siroheme. The chain is Siroheme synthase from Pseudomonas aeruginosa (strain LESB58).